A 340-amino-acid polypeptide reads, in one-letter code: Ephrin-B3 (340 aa).

A signal peptide spans 1–27; it reads MGPPHSGPGGVRVGALLLLGVLGLVSG. One can recognise an Ephrin RBD domain in the interval 28–167; that stretch reads LSLEPVYWNS…TRGMKVLLRV (140 aa). Residues 28–226 lie on the Extracellular side of the membrane; sequence LSLEPVYWNS…EGPLPPPSMP (199 aa). Intrachain disulfides connect C62-C104 and C92-C156. A disordered region spans residues 168 to 225; that stretch reads GQSPRGGAVPRKPVSEMPMERDRGAAHSLEPGKENLPGDPTSNATSRGAEGPLPPPSM. Residues 185–200 show a composition bias toward basic and acidic residues; sequence PMERDRGAAHSLEPGK. N-linked (GlcNAc...) asparagine glycosylation occurs at N210. Residues 227-247 traverse the membrane as a helical segment; the sequence is AVAGAAGGLALLLLGVAGAGG. Residues 248–340 lie on the Cytoplasmic side of the membrane; sequence AMCWRRRRAK…QSPPNIYYKV (93 aa). The interval 254–298 is disordered; that stretch reads RRAKPSESRHPGPGSFGRGGSLGLGGGGGMGPREAEPGELGIALR. Residues 267–284 show a composition bias toward gly residues; the sequence is GSFGRGGSLGLGGGGGMG. An Omega-N-methylarginine modification is found at R271. A Phosphoserine modification is found at S274. Positions 338–340 match the PDZ-binding motif; it reads YKV.

This sequence belongs to the ephrin family. In terms of assembly, interacts with GRIP1 and GRIP2. As to quaternary structure, (Microbial infection) Interacts with nipah virus and hendra virus glycoprotein. As to expression, highly expressed in brain; expressed in embryonic floor plate, roof plate and hindbrain segments.

Its subcellular location is the membrane. Cell surface transmembrane ligand for Eph receptors, a family of receptor tyrosine kinases which are crucial for migration, repulsion and adhesion during neuronal, vascular and epithelial development. Binds promiscuously Eph receptors residing on adjacent cells, leading to contact-dependent bidirectional signaling into neighboring cells. The signaling pathway downstream of the receptor is referred to as forward signaling while the signaling pathway downstream of the ephrin ligand is referred to as reverse signaling. May play a pivotal role in forebrain function. Binds to, and induce the collapse of, commissural axons/growth cones in vitro. May play a role in constraining the orientation of longitudinally projecting axons. In terms of biological role, (Microbial infection) Acts as a receptor for nipah virus and hendra virus. This chain is Ephrin-B3 (EFNB3), found in Homo sapiens (Human).